We begin with the raw amino-acid sequence, 474 residues long: MEDLETIIGLEIHCQLNTKSKMFCSCSTDFRDNEPNTHTCPVCLGLPGSMPMVNKRAIEFALKVGKALNCTIRDESEFSRKNYFYPDLNKAYQITQYDKPLAEWGKLLIDGDNGEKEVRITRIHLEEDPGRSVHMGTTDRGKYTLVDYNRAGIPLIEIVTEPDLRSPKEARKFLNKLRATLEYLNVFDSEKEGSLRVDANISLKGSERVEVKNISSYKGVEKALTFEVTRQRNLLRRGQIVTRETRHFVEARGVTTSSRSKEEENDYRYFPEPDLLPLRVASWVDAIELPELPDARRERFISQYGVSPEHAKTLTGGLKLAEFYETVASEDPALAATWTADYLLGELNYRDFSIDAMPSDLFRELLTLIKSDTITDKSAVEILRLILDAVKDGKKPERPQEIVSRLGLAKTSGDQVTAMIQEVIAEQQAAIDDYYAGKMQALNFLVGQVMKKCRGRADPGHLNTLLKEILDKKV.

Belongs to the GatB/GatE family. GatB subfamily. As to quaternary structure, heterotrimer of A, B and C subunits.

It carries out the reaction L-glutamyl-tRNA(Gln) + L-glutamine + ATP + H2O = L-glutaminyl-tRNA(Gln) + L-glutamate + ADP + phosphate + H(+). It catalyses the reaction L-aspartyl-tRNA(Asn) + L-glutamine + ATP + H2O = L-asparaginyl-tRNA(Asn) + L-glutamate + ADP + phosphate + 2 H(+). Its function is as follows. Allows the formation of correctly charged Asn-tRNA(Asn) or Gln-tRNA(Gln) through the transamidation of misacylated Asp-tRNA(Asn) or Glu-tRNA(Gln) in organisms which lack either or both of asparaginyl-tRNA or glutaminyl-tRNA synthetases. The reaction takes place in the presence of glutamine and ATP through an activated phospho-Asp-tRNA(Asn) or phospho-Glu-tRNA(Gln). This chain is Aspartyl/glutamyl-tRNA(Asn/Gln) amidotransferase subunit B, found in Methanospirillum hungatei JF-1 (strain ATCC 27890 / DSM 864 / NBRC 100397 / JF-1).